Reading from the N-terminus, the 192-residue chain is Xanthine phosphoribosyltransferase (192 aa).

Xanthine-binding residues include leucine 20 and asparagine 27. 5-phospho-alpha-D-ribose 1-diphosphate is bound at residue 128 to 132 (ANGDA). Lysine 156 provides a ligand contact to xanthine.

It belongs to the purine/pyrimidine phosphoribosyltransferase family. Xpt subfamily. As to quaternary structure, homodimer.

It localises to the cytoplasm. It catalyses the reaction XMP + diphosphate = xanthine + 5-phospho-alpha-D-ribose 1-diphosphate. It functions in the pathway purine metabolism; XMP biosynthesis via salvage pathway; XMP from xanthine: step 1/1. In terms of biological role, converts the preformed base xanthine, a product of nucleic acid breakdown, to xanthosine 5'-monophosphate (XMP), so it can be reused for RNA or DNA synthesis. This chain is Xanthine phosphoribosyltransferase, found in Staphylococcus aureus (strain MRSA252).